Consider the following 249-residue polypeptide: Ditrans,polycis-undecaprenyl-diphosphate synthase ((2E,6E)-farnesyl-diphosphate specific) (249 aa).

Asp-26 is an active-site residue. Asp-26 provides a ligand contact to Mg(2+). Residues 27–30, Trp-31, Arg-39, His-43, and 71–73 each bind substrate; these read GNGR and SRE. Asn-74 (proton acceptor) is an active-site residue. Residues Trp-75, Arg-77, Arg-194, and 200-202 each bind substrate; that span reads RIS. Mg(2+) is bound at residue Glu-213.

The protein belongs to the UPP synthase family. In terms of assembly, homodimer. The cofactor is Mg(2+).

The enzyme catalyses 8 isopentenyl diphosphate + (2E,6E)-farnesyl diphosphate = di-trans,octa-cis-undecaprenyl diphosphate + 8 diphosphate. In terms of biological role, catalyzes the sequential condensation of isopentenyl diphosphate (IPP) with (2E,6E)-farnesyl diphosphate (E,E-FPP) to yield (2Z,6Z,10Z,14Z,18Z,22Z,26Z,30Z,34E,38E)-undecaprenyl diphosphate (di-trans,octa-cis-UPP). UPP is the precursor of glycosyl carrier lipid in the biosynthesis of bacterial cell wall polysaccharide components such as peptidoglycan and lipopolysaccharide. The polypeptide is Ditrans,polycis-undecaprenyl-diphosphate synthase ((2E,6E)-farnesyl-diphosphate specific) (Buchnera aphidicola subsp. Schizaphis graminum (strain Sg)).